Reading from the N-terminus, the 249-residue chain is MSSFSAECWDFSGRKPSFSQTCTRLSRYLKEKGSFGDLSLGMTCKPDVNGGSRQPTMMNLFPCEASGMDSSAGQEDIKPKTMFPRQSSFSSSSSSGTKEDVQMIKETTKSVKPESQSAPLTIFYGGRVMVFDDFSAEKAKEVIDLANKGSAKSFTCFTAEVNNNHSAYSQKEIASSPNPVCSPAKTAAQEPIQPNPASLACELPIARRASLHRFLEKRKDRITSKAPYQIDGSAEASSKPTNPAWLSSR.

The 36-residue stretch at 113-148 (PESQSAPLTIFYGGRVMVFDDFSAEKAKEVIDLANK) folds into the Tify domain. Residues 204–229 (PIARRASLHRFLEKRKDRITSKAPYQ) carry the Jas motif. The Nuclear localization signal signature appears at 206-213 (ARRASLHR). The segment at 225 to 249 (KAPYQIDGSAEASSKPTNPAWLSSR) is disordered. The segment covering 235 to 249 (EASSKPTNPAWLSSR) has biased composition (polar residues).

This sequence belongs to the TIFY/JAZ family. In terms of assembly, homo- and heterodimer. Interacts with COI1, MYC2, MYC3, MYC4, AFPH2/NINJA, TIFY10A/JAZ1, TIFY6B/JAZ3, TIFY11A/JAZ5, TIFY11B/JAZ6, TIFY5A/JAZ8, TIFY7/JAZ9, TIFY9/JAZ10, TIFY3A/JAZ11 and TIFY3B/JAZ12. Interacts with RHD6 and RSL1. As to quaternary structure, (Microbial infection) Interacts with the pathogenic Pseudomonas syringae HopZ1a protein. Post-translationally, (Microbial infection) Acetylated by Pseudomonas syringae HopZ1a. Ubiquitinated. Targeted for degradation by the SCF(COI1) E3 ubiquitin ligase-proteasome pathway during jasmonate signaling. As to expression, expressed in cotyledons, hypocotyls, roots, sepals, petal vascular tissue and stigmas of developing flowers. Expressed in stamen filaments after jasmonic acid treatment.

The protein resides in the nucleus. Its function is as follows. Repressor of jasmonate responses. Jasmonoyl-isoleucine (JA-Ile) specifically promotes COI1-TIFY10B/JAZ2 interaction. Activated by MYC2, MYC3 and MYC4 transcription factors. Interacts with and suppresses RHD6 and RSL1 transcription factor activities to negatively regulate jasmonate-stimulated root hair development. The chain is Protein TIFY 10B from Arabidopsis thaliana (Mouse-ear cress).